A 1200-amino-acid polypeptide reads, in one-letter code: MECYYIVISSTHLSNGHFRNIKGVFRGPLSKNGNKTLDYAEKENTIAKALEDLKANFYCELCDKQYYKHQEFDNHINSYDHAHKQRLKELKQREFARNVASKSRKDERKQEKALQRLHKLAELRKETVCAPGSGPMFKSTTVTVRENLNDVSQRESVDPINNQQDLIPSEEKERDGTTALAETETASNCTANNCQIGDQSQAVHRHRIGFSFAFPKKATVKLESCSAAAFSEYSDESSMEKEFSRKTRFVPSTSHLQLPPPTCELLSSEEKGNSPPPEAMCTDKATAQTEERKITSNENNTLLTSSFCQLQHYIPTCSEADTCQNLAPFEDQLPMEAVIVNEDGPVSKSNPNIIEKNPTVPNDRTSAQMTTEENITINDVTKMETRNKIDHEPLTPSSTIEESIRLQKRPDLCKRQCDPFVPVLNKLGSTVLQWPSEMLAYTTTEPSISYSCNPLCFDFKSTKLNNNQDKNKLTLNDLFSEQKEDCCKGAHADCKDVPIARVTNDETGHSKNDYPQVTTLSPVHVLSNGCDLGQNENVGQRYKHISCTNRQTNKYKFTRCQIKRDMLNEKYDKMRLKETREHWFHKSRRKKKRRKLCRYHPGKSSKEPEGSGKTERSRQRTDEARKNPREPVLEKHPRSPERASDLHQLPDERPKAASTHLGEKETMNTTVNTESNDAAPGSQNCGGKNATVVNEQAKPLVIHSVKQNLTYVRTYCCWKARTSRYQEDDGSLASQSNVKGPTQNQPVKRGYSSLTNDSERIHRKRRQHSCSYSSDESLNQQHHLGEYLKPLSTSLISCQPKKKRRRKRSRLHIGDGTTKMKGNSNYPMKCSSLSQPDELAKDCIKEDINPQENVSIEKNSEQTEQTEIKGMLHPYNPLLSEPSGEGEHSVTETTPCDSSQTSNDLATPVNVTRDPSNSTTDNTLLEHNQRSQTTNSNEKQTPFKVTNPERNFRHSQAKSYICRYELAETIPQGKTNEASTEWLCYNSGILNTQPPLQFKEAHVSGHAFVTTEQILAPLPLPEQALLIPLENHDKLKHLPCEVYQHIIQPNMLTNKVKFTFPPPPLPPPSTPVQPLPLQRPFCSTSVTTIHHTVLQHHAAAAAAAAAAAAAGTFKVLQPHQQFLPQVPALARTSIPQISVGTVGPRLCPGGQPALVASPQMPIIPASVLHPSPLAFPPLPHSFFPSLLSPHPTVIPLQPLF.

A C2H2-type zinc finger spans residues 57–81 (FYCELCDKQYYKHQEFDNHINSYDH). 6 disordered regions span residues 252-280 (STSH…PEAM), 343-367 (DGPV…RTSA), 582-687 (HWFH…NCGG), 727-777 (EDDG…SDES), 799-828 (QPKK…NYPM), and 874-949 (PYNP…TNPE). The segment covering 585–603 (HKSRRKKKRRKLCRYHPGK) has biased composition (basic residues). The span at 604-666 (SSKEPEGSGK…ASTHLGEKET (63 aa)) shows a compositional bias: basic and acidic residues. 2 stretches are compositionally biased toward polar residues: residues 667-687 (MNTT…NCGG) and 732-756 (LASQ…SLTN). Basic residues predominate over residues 800 to 811 (PKKKRRRKRSRL). Residues 891–944 (TETTPCDSSQTSNDLATPVNVTRDPSNSTTDNTLLEHNQRSQTTNSNEKQTPFK) show a composition bias toward polar residues.

This is Zinc finger protein 804A (Znf804a) from Mus musculus (Mouse).